We begin with the raw amino-acid sequence, 359 residues long: Glutamate 5-kinase (359 aa).

Residue Lys-7 coordinates ATP. 3 residues coordinate substrate: Ser-47, Asp-135, and Asn-147. 202–208 (SGGITSK) provides a ligand contact to ATP. The region spanning 266–343 (KGSIFINEGA…DQLEDVLGYS (78 aa)) is the PUA domain.

Belongs to the glutamate 5-kinase family.

The protein resides in the cytoplasm. It carries out the reaction L-glutamate + ATP = L-glutamyl 5-phosphate + ADP. It functions in the pathway amino-acid biosynthesis; L-proline biosynthesis; L-glutamate 5-semialdehyde from L-glutamate: step 1/2. Its function is as follows. Catalyzes the transfer of a phosphate group to glutamate to form L-glutamate 5-phosphate. The chain is Glutamate 5-kinase from Kosmotoga olearia (strain ATCC BAA-1733 / DSM 21960 / TBF 19.5.1).